The following is a 249-amino-acid chain: Type III pantothenate kinase (249 aa).

6–13 (DCGNSFIK) contributes to the ATP binding site. Substrate-binding positions include Tyr93 and 100 to 103 (GMDR). Asp102 acts as the Proton acceptor in catalysis. Asp122 is a K(+) binding site. ATP is bound at residue Thr125. Substrate is bound at residue Thr181.

The protein belongs to the type III pantothenate kinase family. In terms of assembly, homodimer. NH4(+) serves as cofactor. It depends on K(+) as a cofactor.

It is found in the cytoplasm. It carries out the reaction (R)-pantothenate + ATP = (R)-4'-phosphopantothenate + ADP + H(+). It functions in the pathway cofactor biosynthesis; coenzyme A biosynthesis; CoA from (R)-pantothenate: step 1/5. Catalyzes the phosphorylation of pantothenate (Pan), the first step in CoA biosynthesis. The protein is Type III pantothenate kinase of Pseudomonas putida (strain W619).